We begin with the raw amino-acid sequence, 563 residues long: PHD finger protein EHD3 (563 aa).

The segment at 1–46 is disordered; sequence MGSQNRPPPPRKRQPPPPEDHLVTYKRRRSKETQPLPLMANGANSK. 3 consecutive PHD-type zinc fingers follow at residues 296 to 348, 420 to 472, and 474 to 524; these read LCPC…CSFK, SNLC…CWYC, and SCLC…CKIR.

Interacts with TRX1. In terms of tissue distribution, expressed in shoot apical meristem and leaves.

The protein localises to the nucleus. Probable transcription factor involved in the regulation of floral induction under long day (LD) conditions. Promotes photoperiodic flowering by repressing GHD7, a major floral repressor. Seems to function independently of HD1. This Oryza sativa subsp. japonica (Rice) protein is PHD finger protein EHD3.